We begin with the raw amino-acid sequence, 63 residues long: Prokaryotic ubiquitin-like protein Pup 1 (63 aa).

Basic and acidic residues-rich tracts occupy residues methionine 1 to glycine 12 and glycine 24 to glutamate 33. Residues methionine 1 to valine 35 are disordered. The ARC ATPase binding stretch occupies residues proline 20–tyrosine 57. The stretch at glutamine 25 to glutamate 51 forms a coiled coil. Deamidated glutamine is present on glutamine 63. Glutamine 63 participates in a covalent cross-link: Isoglutamyl lysine isopeptide (Gln-Lys) (interchain with K-? in acceptor proteins).

The protein belongs to the prokaryotic ubiquitin-like protein family. In terms of assembly, strongly interacts with the proteasome-associated ATPase ARC through a hydrophobic interface; the interacting region of Pup lies in its C-terminal half. There is one Pup binding site per ARC hexamer ring. Post-translationally, is modified by deamidation of its C-terminal glutamine to glutamate by the deamidase Dop, a prerequisite to the subsequent pupylation process.

The protein operates within protein degradation; proteasomal Pup-dependent pathway. Protein modifier that is covalently attached to lysine residues of substrate proteins, thereby targeting them for proteasomal degradation. The tagging system is termed pupylation. This chain is Prokaryotic ubiquitin-like protein Pup 1, found in Saccharopolyspora erythraea (strain ATCC 11635 / DSM 40517 / JCM 4748 / NBRC 13426 / NCIMB 8594 / NRRL 2338).